Consider the following 404-residue polypeptide: Putative arginine deiminase (404 aa).

Catalysis depends on Cys394, which acts as the Amidino-cysteine intermediate.

It belongs to the arginine deiminase family.

It localises to the cytoplasm. The enzyme catalyses L-arginine + H2O = L-citrulline + NH4(+). The protein operates within amino-acid degradation; L-arginine degradation via ADI pathway; carbamoyl phosphate from L-arginine: step 1/2. This Mycoplasma pneumoniae (strain ATCC 29342 / M129 / Subtype 1) (Mycoplasmoides pneumoniae) protein is Putative arginine deiminase (arcA).